A 546-amino-acid chain; its full sequence is Chaperonin GroEL (546 aa).

Residues 29 to 32 (TLGP), 86 to 90 (DGTTT), Gly-413, 476 to 478 (NAA), and Asp-492 contribute to the ATP site. The interval 521-546 (RPDESGNDAGAGAQGMDPSMMGGGMM) is disordered.

This sequence belongs to the chaperonin (HSP60) family. As to quaternary structure, forms a cylinder of 14 subunits composed of two heptameric rings stacked back-to-back. Interacts with the co-chaperonin GroES.

The protein localises to the cytoplasm. The catalysed reaction is ATP + H2O + a folded polypeptide = ADP + phosphate + an unfolded polypeptide.. In terms of biological role, together with its co-chaperonin GroES, plays an essential role in assisting protein folding. The GroEL-GroES system forms a nano-cage that allows encapsulation of the non-native substrate proteins and provides a physical environment optimized to promote and accelerate protein folding. This chain is Chaperonin GroEL, found in Tetragenococcus halophilus (Pediococcus halophilus).